The chain runs to 267 residues: D-aminoacyl-tRNA deacylase (267 aa).

The protein belongs to the DtdA deacylase family. Monomer. It depends on Zn(2+) as a cofactor.

The catalysed reaction is a D-aminoacyl-tRNA + H2O = a tRNA + a D-alpha-amino acid + H(+). It carries out the reaction glycyl-tRNA(Ala) + H2O = tRNA(Ala) + glycine + H(+). Functionally, D-aminoacyl-tRNA deacylase with broad substrate specificity. By recycling D-aminoacyl-tRNA to D-amino acids and free tRNA molecules, this enzyme counteracts the toxicity associated with the formation of D-aminoacyl-tRNA entities in vivo. This is D-aminoacyl-tRNA deacylase from Methanothrix thermoacetophila (strain DSM 6194 / JCM 14653 / NBRC 101360 / PT) (Methanosaeta thermophila).